A 210-amino-acid polypeptide reads, in one-letter code: Urease accessory protein UreF (210 aa).

This sequence belongs to the UreF family. UreD, UreF and UreG form a complex that acts as a GTP-hydrolysis-dependent molecular chaperone, activating the urease apoprotein by helping to assemble the nickel containing metallocenter of UreC. The UreE protein probably delivers the nickel.

Its subcellular location is the cytoplasm. In terms of biological role, required for maturation of urease via the functional incorporation of the urease nickel metallocenter. The chain is Urease accessory protein UreF from Dinoroseobacter shibae (strain DSM 16493 / NCIMB 14021 / DFL 12).